We begin with the raw amino-acid sequence, 97 residues long: Cell division protein FtsL (97 aa).

Over 1–11 (MSRLFVKRLPT) the chain is Cytoplasmic. The helical transmembrane segment at 12–32 (GSFLMLLLYIGLLLSAIAVAY) threads the bilayer. Residues 33–97 (STYWNRQLLN…DPAEVRMVAP (65 aa)) lie on the Periplasmic side of the membrane.

Belongs to the FtsL family. Part of a complex composed of FtsB, FtsL and FtsQ.

The protein resides in the cell inner membrane. Functionally, essential cell division protein. May link together the upstream cell division proteins, which are predominantly cytoplasmic, with the downstream cell division proteins, which are predominantly periplasmic. This is Cell division protein FtsL from Pseudomonas aeruginosa (strain ATCC 15692 / DSM 22644 / CIP 104116 / JCM 14847 / LMG 12228 / 1C / PRS 101 / PAO1).